The primary structure comprises 112 residues: Large ribosomal subunit protein uL24 (112 aa).

Belongs to the universal ribosomal protein uL24 family. In terms of assembly, part of the 50S ribosomal subunit.

One of two assembly initiator proteins, it binds directly to the 5'-end of the 23S rRNA, where it nucleates assembly of the 50S subunit. In terms of biological role, one of the proteins that surrounds the polypeptide exit tunnel on the outside of the subunit. In Desulfitobacterium hafniense (strain Y51), this protein is Large ribosomal subunit protein uL24.